The chain runs to 227 residues: PKHD-type hydroxylase Reut_B4660 (227 aa).

The 101-residue stretch at 78–178 (KVFPPLFNRY…RVSSFFWIQS (101 aa)) folds into the Fe2OG dioxygenase domain. Fe cation is bound by residues His-96, Asp-98, and His-159. 2-oxoglutarate is bound at residue Arg-169.

Requires Fe(2+) as cofactor. L-ascorbate serves as cofactor.

The sequence is that of PKHD-type hydroxylase Reut_B4660 from Cupriavidus pinatubonensis (strain JMP 134 / LMG 1197) (Cupriavidus necator (strain JMP 134)).